We begin with the raw amino-acid sequence, 618 residues long: Manganese lipoxygenase (618 aa).

A signal peptide spans methionine 1 to alanine 16. The span at serine 36–threonine 45 shows a compositional bias: low complexity. The disordered stretch occupies residues serine 36 to alanine 58. Residues glutamine 46–alanine 58 show a composition bias toward polar residues. The Lipoxygenase domain occupies tyrosine 47 to serine 617. 5 N-linked (GlcNAc...) asparagine glycosylation sites follow: asparagine 60, asparagine 91, asparagine 106, asparagine 116, and asparagine 157. 4 residues coordinate Mn(2+): histidine 290, histidine 294, histidine 478, and asparagine 482. Asparagine 513 is a glycosylation site (N-linked (GlcNAc...) asparagine). Residue valine 618 participates in Mn(2+) binding.

This sequence belongs to the lipoxygenase family. Mn(2+) is required as a cofactor. In terms of processing, N- and O-glycosylated.

The protein localises to the secreted. It carries out the reaction (9Z,12Z)-octadecadienoate + O2 = (11S)-hydroperoxy-(9Z,12Z)-octadecadienoate. The catalysed reaction is (9Z,12Z)-octadecadienoate + O2 = (13R)-hydroperoxy-(9Z,11E)-octadecadienoate. The enzyme catalyses (9Z,12Z,15Z)-octadecatrienoate + O2 = (11S)-hydroperoxy-(9Z,12Z,15Z)-octadecatrienoate. It catalyses the reaction (9Z,12Z,15Z)-octadecatrienoate + O2 = (13R)-hydroperoxy-(9Z,11E,15Z)-octadecatrienoate. In terms of biological role, lipoxygenase that metabolizes linoleic and alpha-linolenic acids to 11S- and 13R-hydroperoxy fatty acids. At the end of lipoxygenation, the intermediate product 11S-HPODE from linoleic acid is then transformed into 13R-HPODE as the final product. It also acts on alpha-linolenic acid producing 11S-HPOTrE and 13R-HPOTrE with subsequent transformation of 11S-HPOTrE to 13R-HPOTrE as the final product. Gamma-linolenic acid is a poor substrate. Oleate and arachidonate are not substrates. The sequence is that of Manganese lipoxygenase from Gaeumannomyces tritici (Wheat and barley take-all root rot fungus).